The following is a 350-amino-acid chain: Ceramide synthase 1 (350 aa).

At A2 the chain carries N-acetylalanine. A run of 6 helical transmembrane segments spans residues 53 to 73 (AHLA…WTAL), 103 to 123 (AWKF…LFGT), 148 to 168 (IAAA…ATLY), 176 to 196 (SVVM…SYAF), 239 to 259 (AADL…LYWF), and 287 to 307 (LLLL…AFAA). A TLC domain is found at 97–311 (AKMPESAWKF…IVAFAAKVLT (215 aa)).

Acetylated. Deacetylation by SIRT3 increases enzyme activity and promotes mitochondrial ceramide accumulation.

It is found in the endoplasmic reticulum membrane. It carries out the reaction a sphingoid base + octadecanoyl-CoA = an N-octadecanoyl-sphingoid base + CoA + H(+). The enzyme catalyses sphinganine + octadecanoyl-CoA = N-(octadecanoyl)-sphinganine + CoA + H(+). It catalyses the reaction hexadecasphinganine + octadecanoyl-CoA = N-octadecanoylhexadecasphinganine + CoA + H(+). The catalysed reaction is sphing-4-enine + octadecanoyl-CoA = N-octadecanoylsphing-4-enine + CoA + H(+). It carries out the reaction heptadecasphing-4-enine + octadecanoyl-CoA = N-octadecanoyl-heptadecasphing-4-enine + CoA + H(+). The enzyme catalyses 2-hydroxyoctadecanoyl-CoA + sphinganine = N-(2-hydroxyoctadecanoyl)-sphinganine + CoA + H(+). It catalyses the reaction eicosanoyl-CoA + sphinganine = N-eicosanoylsphinganine + CoA + H(+). The protein operates within lipid metabolism; sphingolipid metabolism. Its activity is regulated as follows. Inhibited by fumonisin B1. Ceramide synthase that catalyzes the transfer of the acyl chain from acyl-CoA to a sphingoid base, with high selectivity toward stearoyl-CoA (octadecanoyl-CoA; C18:0-CoA). N-acylates sphinganine and sphingosine bases to form dihydroceramides and ceramides in de novo synthesis and salvage pathways, respectively. Plays a predominant role in skeletal muscle in regulating C18 ceramide and dihydroceramide levels with an impact on whole-body glucose metabolism and insulin sensitivity. Protects from diet-induced obesity by suppressing the uptake of glucose in multiple organs in a FGF21-dependent way. Generates C18 ceramides in the brain, playing a critical role in cerebellar development and Purkinje cell function. In response to cellular stress mediates mitophagy, a known defense mechanism against cell transformation and aging. Upon mitochondria fission, generates C18 ceramides that anchor lipidated MAP1LC3B/LC3B-II autophagolysosomes to outer mitochondrial membranes to eliminate damaged mitochondria. The sequence is that of Ceramide synthase 1 from Homo sapiens (Human).